Consider the following 308-residue polypeptide: Probable manganese-dependent inorganic pyrophosphatase (308 aa).

The Mn(2+) site is built by His-9, Asp-13, Asp-15, Asp-75, His-97, and Asp-149.

This sequence belongs to the PPase class C family. Mn(2+) is required as a cofactor.

Its subcellular location is the cytoplasm. The catalysed reaction is diphosphate + H2O = 2 phosphate + H(+). The polypeptide is Probable manganese-dependent inorganic pyrophosphatase (Listeria monocytogenes serotype 4a (strain HCC23)).